The sequence spans 1284 residues: Peroxisomal ATPase PEX1 (1284 aa).

The disordered stretch occupies residues 339-373; that stretch reads SPKQQQDKSKQGVLLPDKEKQLSKSPDHKQISSNR. A compositionally biased stretch (basic and acidic residues) spans 343–373; the sequence is QQDKSKQGVLLPDKEKQLSKSPDHKQISSNR. Residues 600–607 and 882–889 contribute to the ATP site; these read GGKGSGKS and GPPGTGKT. Residues S1182, S1210, and S1212 each carry the phosphoserine modification. The disordered stretch occupies residues 1261–1284; the sequence is FQNPKKRKNQSGTVFRTGQKVTLA. Polar residues predominate over residues 1270-1284; sequence QSGTVFRTGQKVTLA.

This sequence belongs to the AAA ATPase family. As to quaternary structure, homooligomer; homooligomerizes in the cytosol, interaction with PEX6 promotes dissociation of the homooligomer. Interacts with PEX6; forming the PEX1-PEX6 AAA ATPase complex, which is composed of a heterohexamer formed by a trimer of PEX1-PEX6 dimers. Interacts indirectly with PEX26, via its interaction with PEX6.

Its subcellular location is the cytoplasm. The protein resides in the cytosol. The protein localises to the peroxisome membrane. The catalysed reaction is ATP + H2O = ADP + phosphate + H(+). In terms of biological role, component of the PEX1-PEX6 AAA ATPase complex, a protein dislocase complex that mediates the ATP-dependent extraction of the PEX5 receptor from peroxisomal membranes, an essential step for PEX5 recycling. Specifically recognizes PEX5 monoubiquitinated at 'Cys-11', and pulls it out of the peroxisome lumen through the PEX2-PEX10-PEX12 retrotranslocation channel. Extraction by the PEX1-PEX6 AAA ATPase complex is accompanied by unfolding of the TPR repeats and release of bound cargo from PEX5. This Mus musculus (Mouse) protein is Peroxisomal ATPase PEX1.